Consider the following 40-residue polypeptide: Dolichyl-diphosphooligosaccharide--protein glycosyltransferase subunit 4 (40 aa).

The Lumenal segment spans residues 1–4; it reads MISD. Residues 5 to 25 form a helical membrane-spanning segment; that stretch reads VQLAIFSNVLGVFLFLLVVAY. At 26–40 the chain is on the cytoplasmic side; that stretch reads HYINANTGKPSAKAK.

Belongs to the OST4 family. In terms of assembly, component of the oligosaccharyltransferase (OST) complex.

Its subcellular location is the endoplasmic reticulum membrane. Functionally, subunit of the oligosaccharyl transferase (OST) complex that catalyzes the initial transfer of a defined glycan (Glc(3)Man(9)GlcNAc(2) in eukaryotes) from the lipid carrier dolichol-pyrophosphate to an asparagine residue within an Asn-X-Ser/Thr consensus motif in nascent polypeptide chains, the first step in protein N-glycosylation. N-glycosylation occurs cotranslationally and the complex associates with the Sec61 complex at the channel-forming translocon complex that mediates protein translocation across the endoplasmic reticulum (ER). All subunits are required for a maximal enzyme activity. This is Dolichyl-diphosphooligosaccharide--protein glycosyltransferase subunit 4 from Drosophila yakuba (Fruit fly).